We begin with the raw amino-acid sequence, 197 residues long: Xanthine phosphoribosyltransferase (197 aa).

Xanthine-binding residues include Leu-20 and Asn-27. 128–132 (ANGQA) contributes to the 5-phospho-alpha-D-ribose 1-diphosphate binding site. Lys-156 serves as a coordination point for xanthine.

The protein belongs to the purine/pyrimidine phosphoribosyltransferase family. Xpt subfamily. Homodimer.

The protein localises to the cytoplasm. It carries out the reaction XMP + diphosphate = xanthine + 5-phospho-alpha-D-ribose 1-diphosphate. It participates in purine metabolism; XMP biosynthesis via salvage pathway; XMP from xanthine: step 1/1. Its function is as follows. Converts the preformed base xanthine, a product of nucleic acid breakdown, to xanthosine 5'-monophosphate (XMP), so it can be reused for RNA or DNA synthesis. The protein is Xanthine phosphoribosyltransferase of Bacillus cereus (strain G9842).